Consider the following 322-residue polypeptide: Ferric-anguibactin-binding protein FatB (322 aa).

A signal peptide spans 1–22; sequence MFKSTLNIAVAIVCSSLVTLTG. Residue cysteine 23 is the site of N-palmitoyl cysteine attachment. A lipid anchor (S-diacylglycerol cysteine) is attached at cysteine 23. The 266-residue stretch at 57–322 folds into the Fe/B12 periplasmic-binding domain; sequence RVAALDMNEV…IDDIIKGYQS (266 aa).

The protein belongs to the bacterial solute-binding protein 8 family. Part of an iron transport system composed of the outer membrane receptor FatA, the periplasmic binding protein FatB and the inner membrane proteins FatC and FatD.

The protein resides in the cell inner membrane. Functionally, involved in the uptake of iron in complex with the siderophore anguibactin. Binds ferric-anguibactin in the periplasm and mediates its transport into the cytoplasm. This is Ferric-anguibactin-binding protein FatB from Vibrio anguillarum (strain ATCC 68554 / 775) (Listonella anguillarum).